We begin with the raw amino-acid sequence, 433 residues long: Acetyl-CoA-benzylalcohol acetyltransferase (433 aa).

Active-site proton acceptor residues include His-152 and Asp-377.

This sequence belongs to the plant acyltransferase family. Post-translationally, the N-terminus is blocked. In terms of tissue distribution, expressed in petals, style, sepals and stamens. Very low expression in stigma and not detected in leaves.

It carries out the reaction benzyl alcohol + acetyl-CoA = benzyl acetate + CoA. The catalysed reaction is (E)-cinnamyl alcohol + acetyl-CoA = (E)-cinnamyl acetate + CoA. Functionally, involved in the biosynthesis of benzyl acetate, a major constituent of the floral scent. Can use benzylalcohol, cinnamylalcohol, 3-cis-hexene-1-ol or heptanol as substrates. Has some activity with 2-phenylethanol and 2-naphtalene-ethanol, but no activity with linalool, 2-hydroxybenzylalcohol, 3-hydroxybenzylalcohol or 4-hydroxybenzylalcohol. The protein is Acetyl-CoA-benzylalcohol acetyltransferase (BEAT) of Clarkia breweri (Fairy fans).